We begin with the raw amino-acid sequence, 130 residues long: MAQYGNQDQMRKTDEYGNHVQETGVYQGTGTGGMMGGTGTGGMMGGTGGEYGTQGMGTGTHHHEGQQQLRRSDSSSSSEDDGEGGRRKKGLKEKIMEKMPGQHEGEYGQTTGEEKKGMMDKIKDKIPGMH.

Positions 1 to 130 (MAQYGNQDQM…KIKDKIPGMH (130 aa)) are disordered. Over residues 27–58 (QGTGTGGMMGGTGTGGMMGGTGGEYGTQGMGT) the composition is skewed to gly residues. Composition is skewed to basic and acidic residues over residues 61–73 (HHHEGQQQLRRSD) and 92–130 (KEKIMEKMPGQHEGEYGQTTGEEKKGMMDKIKDKIPGMH).

Belongs to the plant dehydrin family.

This is Abscisic acid and environmental stress-inducible protein TAS14 (TAS14) from Solanum lycopersicum (Tomato).